The following is a 532-amino-acid chain: Protein FAM227B (532 aa).

The stretch at aspartate 432–asparagine 482 forms a coiled coil. Residues lysine 494–glycine 532 are disordered. Residues serine 500–serine 523 show a composition bias toward low complexity.

This sequence belongs to the FAM227 family.

In Mus musculus (Mouse), this protein is Protein FAM227B (Fam227b).